The sequence spans 295 residues: Protoheme IX farnesyltransferase 2 (295 aa).

9 helical membrane-spanning segments follow: residues 9-29 (ITKP…FFLA), 36-56 (LAVF…GCVF), 80-100 (LISL…GVAL), 108-128 (LAAL…SLYL), 135-155 (GTLV…VAVT), 163-183 (LTLL…IAIF), 209-229 (ILIY…SGYA), 230-250 (GMSY…MAWT), and 265-285 (FVFS…DFKV).

This sequence belongs to the UbiA prenyltransferase family. Protoheme IX farnesyltransferase subfamily.

The protein localises to the cell inner membrane. It catalyses the reaction heme b + (2E,6E)-farnesyl diphosphate + H2O = Fe(II)-heme o + diphosphate. Its pathway is porphyrin-containing compound metabolism; heme O biosynthesis; heme O from protoheme: step 1/1. Converts heme B (protoheme IX) to heme O by substitution of the vinyl group on carbon 2 of heme B porphyrin ring with a hydroxyethyl farnesyl side group. The polypeptide is Protoheme IX farnesyltransferase 2 (Pseudomonas fluorescens (strain Pf0-1)).